The chain runs to 474 residues: Cysteine--tRNA ligase (474 aa).

Position 30 (Cys-30) interacts with Zn(2+). The 'HIGH' region signature appears at Pro-32–Asn-42. Positions 212, 237, and 241 each coordinate Zn(2+). Positions Lys-270–Ser-274 match the 'KMSKS' region motif. Lys-273 is a binding site for ATP.

It belongs to the class-I aminoacyl-tRNA synthetase family. Monomer. It depends on Zn(2+) as a cofactor.

Its subcellular location is the cytoplasm. It catalyses the reaction tRNA(Cys) + L-cysteine + ATP = L-cysteinyl-tRNA(Cys) + AMP + diphosphate. The sequence is that of Cysteine--tRNA ligase from Leptospira borgpetersenii serovar Hardjo-bovis (strain JB197).